Consider the following 56-residue polypeptide: Large ribosomal subunit protein eL37 (56 aa).

Positions 19, 22, 34, and 37 each coordinate Zn(2+). The segment at 19-37 (CRRCGSVSLNIHTKQCTSC) adopts a C4-type zinc-finger fold.

The protein belongs to the eukaryotic ribosomal protein eL37 family. The cofactor is Zn(2+).

Binds to the 23S rRNA. In Methanococcoides burtonii (strain DSM 6242 / NBRC 107633 / OCM 468 / ACE-M), this protein is Large ribosomal subunit protein eL37.